A 405-amino-acid chain; its full sequence is Replication factor C large subunit (405 aa).

47 to 54 (GPPGVGKT) serves as a coordination point for ATP.

This sequence belongs to the activator 1 small subunits family. RfcL subfamily. In terms of assembly, heteromultimer composed of small subunits (RfcS) and large subunits (RfcL).

Functionally, part of the RFC clamp loader complex which loads the PCNA sliding clamp onto DNA. The sequence is that of Replication factor C large subunit from Saccharolobus islandicus (strain L.S.2.15 / Lassen #1) (Sulfolobus islandicus).